The primary structure comprises 200 residues: Holliday junction branch migration complex subunit RuvA (200 aa).

The segment at 1-64 (MLSYLSGTLI…EDALQLYGFI (64 aa)) is domain I. The segment at 65–143 (TTEDREVFKL…KLDLKIDIKE (79 aa)) is domain II. The segment at 144 to 148 (TAFRS) is flexible linker. Residues 149–200 (DKQQVRNDAYSALISLGFTKSIAEKAMRAAIAEVPDGSVDDLIRVALRHVQS) are domain III.

It belongs to the RuvA family. In terms of assembly, homotetramer. Forms an RuvA(8)-RuvB(12)-Holliday junction (HJ) complex. HJ DNA is sandwiched between 2 RuvA tetramers; dsDNA enters through RuvA and exits via RuvB. An RuvB hexamer assembles on each DNA strand where it exits the tetramer. Each RuvB hexamer is contacted by two RuvA subunits (via domain III) on 2 adjacent RuvB subunits; this complex drives branch migration. In the full resolvosome a probable DNA-RuvA(4)-RuvB(12)-RuvC(2) complex forms which resolves the HJ.

The protein localises to the cytoplasm. Functionally, the RuvA-RuvB-RuvC complex processes Holliday junction (HJ) DNA during genetic recombination and DNA repair, while the RuvA-RuvB complex plays an important role in the rescue of blocked DNA replication forks via replication fork reversal (RFR). RuvA specifically binds to HJ cruciform DNA, conferring on it an open structure. The RuvB hexamer acts as an ATP-dependent pump, pulling dsDNA into and through the RuvAB complex. HJ branch migration allows RuvC to scan DNA until it finds its consensus sequence, where it cleaves and resolves the cruciform DNA. The polypeptide is Holliday junction branch migration complex subunit RuvA (Chloroherpeton thalassium (strain ATCC 35110 / GB-78)).